A 125-amino-acid chain; its full sequence is Dirigent protein 22 (125 aa).

N-linked (GlcNAc...) asparagine glycosylation is found at N8, N30, and N65.

The protein belongs to the plant dirigent protein family. As to quaternary structure, homodimer.

It localises to the secreted. It is found in the extracellular space. Its subcellular location is the apoplast. Dirigent proteins impart stereoselectivity on the phenoxy radical-coupling reaction, yielding optically active lignans from two molecules of coniferyl alcohol in the biosynthesis of lignans, flavonolignans, and alkaloids and thus plays a central role in plant secondary metabolism. The sequence is that of Dirigent protein 22 (DIR22) from Arabidopsis thaliana (Mouse-ear cress).